A 775-amino-acid polypeptide reads, in one-letter code: Subtilisin-like protease SBT4.1 (775 aa).

An N-terminal signal peptide occupies residues 1 to 23 (MAIAFHTFLLQLLLFFFASFAEA). N-linked (GlcNAc...) asparagine glycosylation occurs at Asn-24. Residues 24–106 (NDSRKTYLVQ…VSRSRNLKLQ (83 aa)) constitute a propeptide, activation peptide. The region spanning 29–105 (TYLVQMKVGG…EVSRSRNLKL (77 aa)) is the Inhibitor I9 domain. In terms of domain architecture, Peptidase S8 spans 110–606 (SWDFMNLTLK…SGHLNATKVR (497 aa)). Asn-115 and Asn-126 each carry an N-linked (GlcNAc...) asparagine glycan. The Charge relay system role is filled by Asp-136. Asn-162 carries N-linked (GlcNAc...) asparagine glycosylation. His-196 serves as the catalytic Charge relay system. In terms of domain architecture, PA spans 365–459 (FYPLLNEKAP…FLDEQKKGKL (95 aa)). N-linked (GlcNAc...) asparagine glycosylation occurs at Asn-437. Ser-551 functions as the Charge relay system in the catalytic mechanism. N-linked (GlcNAc...) asparagine glycosylation occurs at Asn-601.

It belongs to the peptidase S8 family. The C-terminal propeptide is autocleaved.

The protein localises to the secreted. This chain is Subtilisin-like protease SBT4.1, found in Arabidopsis thaliana (Mouse-ear cress).